Here is a 546-residue protein sequence, read N- to C-terminus: 5'-nucleotidase domain-containing protein 3 (546 aa).

Asp-100 functions as the Nucleophile in the catalytic mechanism. Residues Asp-100 and Asp-102 each coordinate Mg(2+). The Proton donor role is filled by Asp-102. 249–257 (KDSIRDVHI) contacts substrate. Asp-387 is a binding site for Mg(2+).

The protein belongs to the 5'(3')-deoxyribonucleotidase family. Mg(2+) serves as cofactor.

This is 5'-nucleotidase domain-containing protein 3 (Nt5dc3) from Mus musculus (Mouse).